Consider the following 281-residue polypeptide: Shikimate dehydrogenase (NADP(+)) (281 aa).

Shikimate-binding positions include 14–16 (SRS) and Thr-61. Lys-65 (proton acceptor) is an active-site residue. The shikimate site is built by Asn-86 and Asp-101. NADP(+) is bound by residues 127-131 (GAGGA), 151-156 (NRTLAR), and Val-216. Residue Tyr-218 coordinates shikimate. Gly-239 lines the NADP(+) pocket.

Belongs to the shikimate dehydrogenase family. Homodimer.

The catalysed reaction is shikimate + NADP(+) = 3-dehydroshikimate + NADPH + H(+). It functions in the pathway metabolic intermediate biosynthesis; chorismate biosynthesis; chorismate from D-erythrose 4-phosphate and phosphoenolpyruvate: step 4/7. Its function is as follows. Involved in the biosynthesis of the chorismate, which leads to the biosynthesis of aromatic amino acids. Catalyzes the reversible NADPH linked reduction of 3-dehydroshikimate (DHSA) to yield shikimate (SA). The chain is Shikimate dehydrogenase (NADP(+)) from Azorhizobium caulinodans (strain ATCC 43989 / DSM 5975 / JCM 20966 / LMG 6465 / NBRC 14845 / NCIMB 13405 / ORS 571).